We begin with the raw amino-acid sequence, 431 residues long: Intraflagellar transport protein 38 (431 aa).

Positions S177–S218 form a coiled coil. Residues I346–F431 form a disordered region. Residues I352 to Q370 are compositionally biased toward acidic residues. Residues P384–E405 show a composition bias toward basic and acidic residues. The segment covering G420–F431 has biased composition (acidic residues).

Belongs to the CLUAP1 family.

It localises to the cell projection. The protein resides in the cilium. It is found in the flagellum. The protein localises to the cytoplasm. Its subcellular location is the cytoskeleton. It localises to the flagellum axoneme. The protein resides in the flagellum basal body. Component of the intraflagellar transport complex B (IFT-B) involved in flagellar assembly. In Giardia intestinalis (strain ATCC 50803 / WB clone C6) (Giardia lamblia), this protein is Intraflagellar transport protein 38.